Here is a 356-residue protein sequence, read N- to C-terminus: Tyrosine recombinase XerS (356 aa).

The Core-binding (CB) domain maps to 16–121 (LMPWYVLEYY…ALSSLYKYLT (106 aa)). One can recognise a Tyr recombinase domain in the interval 169 to 354 (GFLTYIDQEH…VNDEQKNALD (186 aa)). Catalysis depends on residues arginine 210, lysine 234, histidine 306, arginine 309, and histidine 332. Catalysis depends on tyrosine 341, which acts as the O-(3'-phospho-DNA)-tyrosine intermediate.

This sequence belongs to the 'phage' integrase family. XerS subfamily.

It localises to the cytoplasm. Its activity is regulated as follows. FtsK is required for recombination. In terms of biological role, site-specific tyrosine recombinase, which acts by catalyzing the cutting and rejoining of the recombining DNA molecules. Essential to convert dimers of the bacterial chromosome into monomers to permit their segregation at cell division. In Streptococcus pneumoniae (strain P1031), this protein is Tyrosine recombinase XerS.